The following is a 373-amino-acid chain: Dual-specificity RNA methyltransferase RlmN (373 aa).

Glutamate 94 serves as the catalytic Proton acceptor. The Radical SAM core domain maps to 100–339; the sequence is DGDRATLCVS…VTVRKTRGDD (240 aa). A disulfide bond links cysteine 107 and cysteine 344. [4Fe-4S] cluster is bound by residues cysteine 114, cysteine 118, and cysteine 121. Residues 168-169, serine 200, 222-224, and asparagine 301 each bind S-adenosyl-L-methionine; these read GE and SLH. Cysteine 344 functions as the S-methylcysteine intermediate in the catalytic mechanism.

This sequence belongs to the radical SAM superfamily. RlmN family. Requires [4Fe-4S] cluster as cofactor.

Its subcellular location is the cytoplasm. The enzyme catalyses adenosine(2503) in 23S rRNA + 2 reduced [2Fe-2S]-[ferredoxin] + 2 S-adenosyl-L-methionine = 2-methyladenosine(2503) in 23S rRNA + 5'-deoxyadenosine + L-methionine + 2 oxidized [2Fe-2S]-[ferredoxin] + S-adenosyl-L-homocysteine. The catalysed reaction is adenosine(37) in tRNA + 2 reduced [2Fe-2S]-[ferredoxin] + 2 S-adenosyl-L-methionine = 2-methyladenosine(37) in tRNA + 5'-deoxyadenosine + L-methionine + 2 oxidized [2Fe-2S]-[ferredoxin] + S-adenosyl-L-homocysteine. Functionally, specifically methylates position 2 of adenine 2503 in 23S rRNA and position 2 of adenine 37 in tRNAs. m2A2503 modification seems to play a crucial role in the proofreading step occurring at the peptidyl transferase center and thus would serve to optimize ribosomal fidelity. This Photobacterium profundum (strain SS9) protein is Dual-specificity RNA methyltransferase RlmN.